We begin with the raw amino-acid sequence, 44 residues long: Small ribosomal subunit protein eS31 (44 aa).

Zn(2+) contacts are provided by C18, C21, C35, and C38. Residues 18–38 (CPRCGDTFLAAHDDRQVCGRC) form a C4-type zinc finger.

It belongs to the eukaryotic ribosomal protein eS31 family. Part of the 30S ribosomal subunit. It depends on Zn(2+) as a cofactor.

This is Small ribosomal subunit protein eS31 from Halobacterium salinarum (strain ATCC 29341 / DSM 671 / R1).